Reading from the N-terminus, the 319-residue chain is Homoserine kinase (319 aa).

100–110 (PLSSGMGSSAS) serves as a coordination point for ATP.

This sequence belongs to the GHMP kinase family. Homoserine kinase subfamily.

It localises to the cytoplasm. It carries out the reaction L-homoserine + ATP = O-phospho-L-homoserine + ADP + H(+). It participates in amino-acid biosynthesis; L-threonine biosynthesis; L-threonine from L-aspartate: step 4/5. In terms of biological role, catalyzes the ATP-dependent phosphorylation of L-homoserine to L-homoserine phosphate. In Chloroherpeton thalassium (strain ATCC 35110 / GB-78), this protein is Homoserine kinase.